The sequence spans 262 residues: Apolipoprotein A-I-2 (262 aa).

Positions 1-18 are cleaved as a signal peptide; the sequence is MQFLALALTILLAAATQA. A 3 X approximate tandem repeats region spans residues 32-63; sequence VKVAMMEYMAQVKETAQRSIDHLDDTEYKEYK. Repeat copies occupy residues 64–85 and 87–107. A 10 X approximate tandem repeats region spans residues 64 to 262; the sequence is VQLSQSLDNL…YETISQAMKA (199 aa). Residues 108–118 form a 3; half-length repeat; that stretch reads KDVEELRSQLE. 5 tandem repeats follow at residues 119–140, 141–162, 163–184, 185–206, and 207–228. The stretch at 229 to 239 is one 9; half-length repeat; the sequence is PLTTDFKGQLG. The stretch at 240-262 is repeat 10; sequence PAAEQAKEKLMALYETISQAMKA.

It belongs to the apolipoprotein A1/A4/E family.

The protein resides in the secreted. Functionally, participates in the reverse transport of cholesterol from tissues to the liver for excretion by promoting cholesterol efflux from tissues and by acting as a cofactor for the lecithin cholesterol acyltransferase (LCAT). The polypeptide is Apolipoprotein A-I-2 (Oncorhynchus mykiss (Rainbow trout)).